The chain runs to 244 residues: Flavin-dependent thymidylate synthase (244 aa).

The 223-residue stretch at 17–239 (ITVELVKHSA…PETHAAFEKQ (223 aa)) folds into the ThyX domain. FAD is bound by residues S68, 91-93 (RHR), and E99. DUMP is bound by residues 88–91 (EFMR), 99–103 (EESGR), and R171. Residues 91-101 (RHRIASYNEES) carry the ThyX motif motif. Residues 187-189 (NAR) and N193 each bind FAD. R198 contributes to the dUMP binding site. Catalysis depends on R198, which acts as the Involved in ionization of N3 of dUMP, leading to its activation.

This sequence belongs to the thymidylate synthase ThyX family. Homotetramer. It depends on FAD as a cofactor.

It catalyses the reaction dUMP + (6R)-5,10-methylene-5,6,7,8-tetrahydrofolate + NADPH + H(+) = dTMP + (6S)-5,6,7,8-tetrahydrofolate + NADP(+). Its pathway is pyrimidine metabolism; dTTP biosynthesis. Its function is as follows. Catalyzes the reductive methylation of 2'-deoxyuridine-5'-monophosphate (dUMP) to 2'-deoxythymidine-5'-monophosphate (dTMP) while utilizing 5,10-methylenetetrahydrofolate (mTHF) as the methyl donor, and NADPH and FADH(2) as the reductant. The protein is Flavin-dependent thymidylate synthase of Tropheryma whipplei (strain Twist) (Whipple's bacillus).